The following is a 191-amino-acid chain: Fe/S biogenesis protein NfuA (191 aa).

[4Fe-4S] cluster contacts are provided by C149 and C152.

The protein belongs to the NfuA family. As to quaternary structure, homodimer. [4Fe-4S] cluster is required as a cofactor.

Functionally, involved in iron-sulfur cluster biogenesis. Binds a 4Fe-4S cluster, can transfer this cluster to apoproteins, and thereby intervenes in the maturation of Fe/S proteins. Could also act as a scaffold/chaperone for damaged Fe/S proteins. The polypeptide is Fe/S biogenesis protein NfuA (Escherichia coli O139:H28 (strain E24377A / ETEC)).